Reading from the N-terminus, the 359-residue chain is Dual-specificity RNA methyltransferase RlmN 1 (359 aa).

The active-site Proton acceptor is E96. One can recognise a Radical SAM core domain in the interval 102–335; the sequence is FKGRATVCIS…STVRQRRGID (234 aa). A disulfide bond links C109 and C340. [4Fe-4S] cluster contacts are provided by C116, C120, and C123. S-adenosyl-L-methionine contacts are provided by residues 166 to 167, S198, 221 to 223, and N297; these read GE and SLH. The active-site S-methylcysteine intermediate is the C340.

The protein belongs to the radical SAM superfamily. RlmN family. [4Fe-4S] cluster serves as cofactor.

Its subcellular location is the cytoplasm. The catalysed reaction is adenosine(2503) in 23S rRNA + 2 reduced [2Fe-2S]-[ferredoxin] + 2 S-adenosyl-L-methionine = 2-methyladenosine(2503) in 23S rRNA + 5'-deoxyadenosine + L-methionine + 2 oxidized [2Fe-2S]-[ferredoxin] + S-adenosyl-L-homocysteine. It carries out the reaction adenosine(37) in tRNA + 2 reduced [2Fe-2S]-[ferredoxin] + 2 S-adenosyl-L-methionine = 2-methyladenosine(37) in tRNA + 5'-deoxyadenosine + L-methionine + 2 oxidized [2Fe-2S]-[ferredoxin] + S-adenosyl-L-homocysteine. In terms of biological role, specifically methylates position 2 of adenine 2503 in 23S rRNA and position 2 of adenine 37 in tRNAs. m2A2503 modification seems to play a crucial role in the proofreading step occurring at the peptidyl transferase center and thus would serve to optimize ribosomal fidelity. In Myxococcus xanthus (strain DK1622), this protein is Dual-specificity RNA methyltransferase RlmN 1.